The sequence spans 227 residues: MKFFVALALFACLGSLALAKDDEYCQNTVITACSTSAFSANSICNARFAGIDHIEPEIQSYINANLAKSYDYLLLATHFNSYQKNRPGFQKLYQGLSDRSFEDSIALIKQVTRRGGIVDFNTRHESSGSVSTKRGTLEVDELHSLALALDTEKQLATGATHVHSRATHATDAERDPELAHYFEENFLGKQAESVRKLSGYANDLAKLMKVPDPSLSVYLFDEYLQKQ.

Positions 1–19 (MKFFVALALFACLGSLALA) are cleaved as a signal peptide. An intrachain disulfide couples Cys25 to Cys44. Residues 48–208 (FAGIDHIEPE…GYANDLAKLM (161 aa)) form the Ferritin-like diiron domain.

Belongs to the ferritin family. Oligomer of 12 light (L) chains and 12 heavy (H) chains; L and H chains are disulfide-linked. The functional molecule forms a roughly spherical shell with a diameter of 12 nm and contains a central cavity into which the insoluble ferric iron core is deposited. Expressed in hemolymph, gut, ovaries and to a lesser extent in testes (at protein level). Expressed in the head (at protein level).

The protein localises to the golgi apparatus. It is found in the secreted. Its function is as follows. Stores iron in a soluble, non-toxic, readily available form. Important for iron homeostasis. Iron is taken up in the ferrous form and deposited as ferric hydroxides after oxidation. Ferritin is composed of a heavy (H) chain which is responsible for the oxidation and uptake of ferrous iron, and a light (L) chain which facilitates the nucleation of the ferrihydrite iron core. Required for dietary iron absorption in the midgut. Involved in tissue iron detoxification by exporting excess iron. Plays a role in the maintenance of circadian rhythms. Required for embryo and larval development. This chain is Ferritin light chain, found in Drosophila melanogaster (Fruit fly).